The chain runs to 303 residues: UDP-N-acetylenolpyruvoylglucosamine reductase (303 aa).

Residues 32-212 enclose the FAD-binding PCMH-type domain; it reads IGGKADLFLN…EQETKEYLAK (181 aa). Residue arginine 176 is part of the active site. Serine 226 functions as the Proton donor in the catalytic mechanism. Residue glutamate 296 is part of the active site.

Belongs to the MurB family. FAD is required as a cofactor.

The protein resides in the cytoplasm. It carries out the reaction UDP-N-acetyl-alpha-D-muramate + NADP(+) = UDP-N-acetyl-3-O-(1-carboxyvinyl)-alpha-D-glucosamine + NADPH + H(+). Its pathway is cell wall biogenesis; peptidoglycan biosynthesis. Cell wall formation. This is UDP-N-acetylenolpyruvoylglucosamine reductase from Desulforamulus reducens (strain ATCC BAA-1160 / DSM 100696 / MI-1) (Desulfotomaculum reducens).